The following is a 160-amino-acid chain: Phosphopantetheine adenylyltransferase (160 aa).

Ser-10 lines the substrate pocket. Residues Ser-10 to Phe-11 and His-18 contribute to the ATP site. Substrate is bound by residues Lys-42, Thr-74, and Arg-88. Residues Gly-89–Arg-91, Glu-99, and Tyr-124–Thr-130 contribute to the ATP site.

It belongs to the bacterial CoaD family. In terms of assembly, homohexamer. Mg(2+) is required as a cofactor.

It is found in the cytoplasm. The enzyme catalyses (R)-4'-phosphopantetheine + ATP + H(+) = 3'-dephospho-CoA + diphosphate. It functions in the pathway cofactor biosynthesis; coenzyme A biosynthesis; CoA from (R)-pantothenate: step 4/5. Reversibly transfers an adenylyl group from ATP to 4'-phosphopantetheine, yielding dephospho-CoA (dPCoA) and pyrophosphate. In Leptospira borgpetersenii serovar Hardjo-bovis (strain L550), this protein is Phosphopantetheine adenylyltransferase.